Consider the following 176-residue polypeptide: uncharacterized protein (176 aa).

A signal peptide spans 1–20; it reads MIKKISIILITLFIIQLTKS. A disordered region spans residues 26–46; that stretch reads NNNNNNNNNNNNNNNNNNNNN. The N-linked (GlcNAc...) asparagine glycan is linked to Asn120.

It belongs to the Dictyostelium gerABC family.

It is found in the secreted. This is an uncharacterized protein from Dictyostelium discoideum (Social amoeba).